The sequence spans 238 residues: MKIDIIISADDIVESRVRNKIAVIIDIFRATSVIITALDNGAREVIPYLTIEETLEYAKKLSRDNYILGGERKAVKIEGFDLSNSPLEYIKEKVEDKTVLMTTTNGTRALTKSMEAKRVFIGAMINGESVAKKLININDDVVIINAGTNGNFSMDDFICSGYIINRILDVNRNIELTDIAKTACMIYKENINILSYVREASHYSVMKSLGLNNDIDYCIKKSIIDIVPEYKDGKITCE.

This sequence belongs to the ComB family. Mg(2+) serves as cofactor.

The enzyme catalyses (2R)-O-phospho-3-sulfolactate + H2O = (2R)-3-sulfolactate + phosphate. The protein is Probable 2-phosphosulfolactate phosphatase of Clostridium beijerinckii (strain ATCC 51743 / NCIMB 8052) (Clostridium acetobutylicum).